A 108-amino-acid polypeptide reads, in one-letter code: Glutaredoxin-1 (108 aa).

A Glutaredoxin domain is found at 3 to 106; it reads EEFVQQRLAN…DILSSIGVLR (104 aa). Cysteines 23 and 26 form a disulfide.

Belongs to the glutaredoxin family.

The protein localises to the virion. Its function is as follows. Has thioltransferase and dehydroascorbate reductase activities. The sequence is that of Glutaredoxin-1 (OPG075) from Camelpox virus (strain M-96).